A 346-amino-acid polypeptide reads, in one-letter code: MHAALEIKEAEFQTDQVVGLVENSFTLYSLGQNGGPLESCCSSHLISDGAFQEIISLDGGSHLSALVELIQSKHLSVDSWSSITKYDNYTVENESYAKAWHLSEQRIKTFLITHCHLDHIYGAVINSAMFGPQNPRTIVGLNYVIDTLKKHVFNNLLWPSLDKAGFINFQVVEPSMYTSLTTTLSILPFPVNHGSSFGQELKSSAFLFRNNLSDRYFLAFGDVEPDMVASEPLNIHIWRACSSLIAQRKLSHILIECSTPDIPDTLLFGHFCPRHLVNELCILQSLVQSYGVIMPTLTCLLTHLKSHPLQSANPADVILEQLESLSSKSSLSVTFKILQRGQFYKF.

Belongs to the cyclic nucleotide phosphodiesterase class-II family.

It catalyses the reaction a nucleoside 3',5'-cyclic phosphate + H2O = a nucleoside 5'-phosphate + H(+). In Schizosaccharomyces pombe (strain 972 / ATCC 24843) (Fission yeast), this protein is 3',5'-cyclic-nucleotide phosphodiesterase (cgs2).